The sequence spans 456 residues: Phosphomannomutase (456 aa).

Serine 98 acts as the Phosphoserine intermediate in catalysis. Mg(2+)-binding residues include serine 98, aspartate 246, aspartate 248, and aspartate 250.

This sequence belongs to the phosphohexose mutase family. Mg(2+) is required as a cofactor.

It catalyses the reaction alpha-D-mannose 1-phosphate = D-mannose 6-phosphate. The protein operates within nucleotide-sugar biosynthesis; GDP-alpha-D-mannose biosynthesis; alpha-D-mannose 1-phosphate from D-fructose 6-phosphate: step 2/2. It functions in the pathway bacterial outer membrane biogenesis; LPS O-antigen biosynthesis. In terms of biological role, involved in GDP-mannose biosynthesis which serves as the activated sugar nucleotide precursor for mannose residues in cell surface polysaccharides. This enzyme participates in synthesis of the LPS O9 antigen. This is Phosphomannomutase (manB) from Escherichia coli.